The primary structure comprises 453 residues: Dibenzothiophene-sulfone monooxygenase (453 aa).

FMN is bound by residues Asp-59, Thr-106, His-156, Tyr-160, and Ser-231.

The protein belongs to the NtaA/SnaA/DszA monooxygenase family. Homodimer.

The protein resides in the cytoplasm. It carries out the reaction dibenzothiophene 5,5-dioxide + FMNH2 + NADH + O2 = 2'-hydroxybiphenyl-2-sulfinate + FMN + NAD(+) + H2O + H(+). It participates in sulfur metabolism; dibenzothiophene degradation. Catalyzes the second step of the '4S' desulfurization pathway that removes covalently bound sulfur from dibenzothiophene (DBT) without breaking carbon-carbon bonds. Metabolizes DBT-sulfone (DBTO2 or DBT 5,5-dioxide) to 2-(2'-hydroxyphenyl)benzene sulphinate (HBPS). This is Dibenzothiophene-sulfone monooxygenase from Rhodococcus erythropolis (Arthrobacter picolinophilus).